Here is a 402-residue protein sequence, read N- to C-terminus: L-threonine ammonia-lyase (402 aa).

Position 51 is an N6-(pyridoxal phosphate)lysine (Lys-51). Residues Asn-78, 178-181 (GGGL), and Ser-302 contribute to the pyridoxal 5'-phosphate site. The ACT domain maps to 327–402 (KLKVELDDLP…GVGYLVDVLK (76 aa)).

The protein belongs to the serine/threonine dehydratase family. Pyridoxal 5'-phosphate serves as cofactor.

It catalyses the reaction L-threonine = 2-oxobutanoate + NH4(+). It carries out the reaction L-serine = pyruvate + NH4(+). The protein operates within amino-acid biosynthesis; L-isoleucine biosynthesis; 2-oxobutanoate from L-threonine: step 1/1. Catalyzes the conversion of threonine to 2-oxobutanoate and ammonia. Functions in the threonine-dependent pathway of isoleucine biosynthesis, which is the minor pathway for isoleucine biosynthesis in G.sulfurreducens. Also displays serine ammonia-lyase activity, yielding pyruvate from L-serine. The protein is L-threonine ammonia-lyase of Geobacter sulfurreducens (strain ATCC 51573 / DSM 12127 / PCA).